The chain runs to 152 residues: Cyanate hydratase (152 aa).

Catalysis depends on residues Arg-98, Glu-101, and Ser-124.

Belongs to the cyanase family.

It catalyses the reaction cyanate + hydrogencarbonate + 3 H(+) = NH4(+) + 2 CO2. In terms of biological role, catalyzes the reaction of cyanate with bicarbonate to produce ammonia and carbon dioxide. This is Cyanate hydratase from Uncinocarpus reesii (strain UAMH 1704).